We begin with the raw amino-acid sequence, 333 residues long: Beta-ketoacyl-[acyl-carrier-protein] synthase III (333 aa).

Active-site residues include Cys114 and His255. The ACP-binding stretch occupies residues 256–260; the sequence is QANYR. Residue Asn285 is part of the active site.

This sequence belongs to the thiolase-like superfamily. FabH family. Homodimer.

The protein resides in the cytoplasm. It carries out the reaction malonyl-[ACP] + acetyl-CoA + H(+) = 3-oxobutanoyl-[ACP] + CO2 + CoA. It functions in the pathway lipid metabolism; fatty acid biosynthesis. In terms of biological role, catalyzes the condensation reaction of fatty acid synthesis by the addition to an acyl acceptor of two carbons from malonyl-ACP. Catalyzes the first condensation reaction which initiates fatty acid synthesis and may therefore play a role in governing the total rate of fatty acid production. Possesses both acetoacetyl-ACP synthase and acetyl transacylase activities. Its substrate specificity determines the biosynthesis of branched-chain and/or straight-chain of fatty acids. In Aliarcobacter butzleri (strain RM4018) (Arcobacter butzleri), this protein is Beta-ketoacyl-[acyl-carrier-protein] synthase III.